The chain runs to 213 residues: Holliday junction resolvase RecU (213 aa).

4 residues coordinate Mg(2+): Thr-99, Asp-101, Glu-114, and Gln-133.

This sequence belongs to the RecU family. Mg(2+) serves as cofactor.

It localises to the cytoplasm. It carries out the reaction Endonucleolytic cleavage at a junction such as a reciprocal single-stranded crossover between two homologous DNA duplexes (Holliday junction).. Its function is as follows. Endonuclease that resolves Holliday junction intermediates in genetic recombination. Cleaves mobile four-strand junctions by introducing symmetrical nicks in paired strands. Promotes annealing of linear ssDNA with homologous dsDNA. Required for DNA repair, homologous recombination and chromosome segregation. The chain is Holliday junction resolvase RecU from Lactococcus lactis subsp. cremoris (strain MG1363).